A 322-amino-acid chain; its full sequence is Ribonuclease Z (322 aa).

Zn(2+) is bound by residues H60, H62, D64, H65, H140, D210, and H270. The active-site Proton acceptor is D64.

Belongs to the RNase Z family. In terms of assembly, homodimer. Requires Zn(2+) as cofactor.

The catalysed reaction is Endonucleolytic cleavage of RNA, removing extra 3' nucleotides from tRNA precursor, generating 3' termini of tRNAs. A 3'-hydroxy group is left at the tRNA terminus and a 5'-phosphoryl group is left at the trailer molecule.. Its function is as follows. Zinc phosphodiesterase, which displays some tRNA 3'-processing endonuclease activity. Probably involved in tRNA maturation, by removing a 3'-trailer from precursor tRNA. In Methanococcus aeolicus (strain ATCC BAA-1280 / DSM 17508 / OCM 812 / Nankai-3), this protein is Ribonuclease Z.